The primary structure comprises 278 residues: Large ribosomal subunit protein uL2 (278 aa).

2 stretches are compositionally biased toward basic residues: residues 210-219 (RSRWLGKRPQ) and 252-263 (KKSRGIKTRNSK). The interval 210–278 (RSRWLGKRPQ…LIIRHRKGNK (69 aa)) is disordered.

The protein belongs to the universal ribosomal protein uL2 family. In terms of assembly, part of the 50S ribosomal subunit. Forms a bridge to the 30S subunit in the 70S ribosome.

In terms of biological role, one of the primary rRNA binding proteins. Required for association of the 30S and 50S subunits to form the 70S ribosome, for tRNA binding and peptide bond formation. It has been suggested to have peptidyltransferase activity; this is somewhat controversial. Makes several contacts with the 16S rRNA in the 70S ribosome. In Lactobacillus johnsonii (strain CNCM I-12250 / La1 / NCC 533), this protein is Large ribosomal subunit protein uL2.